A 264-amino-acid polypeptide reads, in one-letter code: Interleukin-33 (264 aa).

A homeodomain-like HTH domain region spans residues 1–67 (MRPRMKYSNS…ETCYFGKEPA (67 aa)). Positions 1–101 (MRPRMKYSNS…RSLLGSIQAF (101 aa)) are excised as a propeptide. An interaction with RELA region spans residues 66–108 (PAKRYSLKSGSKHEGRLSTCLPDSRKRSLLGSIQAFAASVDTL).

This sequence belongs to the IL-1 family. Highly divergent. In terms of assembly, forms a 1:1:1 heterotrimeric complex with its primary high-affinity receptor IL1RL1 and the coreceptor IL1RAP. Interacts with cargo receptor TMED10; the interaction mediates the translocation from the cytoplasm into the ERGIC (endoplasmic reticulum-Golgi intermediate compartment) and thereby secretion. In terms of processing, the full-length protein can be released from cells and is able to signal via the IL1RL1/ST2 receptor. However, proteolytic processing by CELA1, CSTG/cathepsin G and ELANE/neutrophil elastase produces C-terminal peptides that are more active than the unprocessed full-length protein. May also be proteolytically processed by calpains. Proteolytic cleavage mediated by apoptotic caspases including CASP3 and CASP7 results in IL33 inactivation. In vitro proteolytic cleavage by CASP1 was reported but could not be confirmed in vivo suggesting that IL33 is probably not a direct substrate for that caspase.

The protein localises to the nucleus. It localises to the chromosome. The protein resides in the cytoplasm. It is found in the cytoplasmic vesicle. Its subcellular location is the secretory vesicle. The protein localises to the secreted. Cytokine that binds to and signals through the IL1RL1/ST2 receptor which in turn activates NF-kappa-B and MAPK signaling pathways in target cells. Involved in the maturation of Th2 cells inducing the secretion of T-helper type 2-associated cytokines. Also involved in activation of mast cells, basophils, eosinophils and natural killer cells. Acts as a chemoattractant for Th2 cells, and may function as an 'alarmin', that amplifies immune responses during tissue injury. Induces rapid UCP2-dependent mitochondrial rewiring that attenuates the generation of reactive oxygen species and preserves the integrity of Krebs cycle required for persistent production of itaconate and subsequent GATA3-dependent differentiation of inflammation-resolving alternatively activated macrophages. Functionally, in quiescent endothelia the uncleaved form is constitutively and abundantly expressed, and acts as a chromatin-associated nuclear factor with transcriptional repressor properties, it may sequester nuclear NF-kappaB/RELA, lowering expression of its targets. This form is rapidely lost upon angiogenic or pro-inflammatory activation. The sequence is that of Interleukin-33 from Rattus norvegicus (Rat).